Here is a 529-residue protein sequence, read N- to C-terminus: Serine/threonine-protein kinase RIO2 (529 aa).

The 177-residue stretch at 97 to 273 (VGNQIGIGKE…RDVTCVRTFF (177 aa)) folds into the Protein kinase domain. ATP is bound at residue lysine 123. Aspartate 228 (proton acceptor) is an active-site residue. 2 disordered regions span residues 331-366 (RNRQ…KDHE) and 411-452 (EGYK…GHVA). The segment covering 337 to 346 (DLGEDEDDSD) has biased composition (acidic residues). The segment covering 411 to 428 (EGYKDIELPPEDFKRPAD) has biased composition (basic and acidic residues). A compositionally biased stretch (acidic residues) spans 429-447 (SENDDENDEDEEEGEEEDA).

It belongs to the protein kinase superfamily. RIO-type Ser/Thr kinase family. Mg(2+) serves as cofactor. In terms of tissue distribution, expressed in pharynx (metacorpus and posterior bulbus). Expression is restricted to adult stage.

It carries out the reaction L-seryl-[protein] + ATP = O-phospho-L-seryl-[protein] + ADP + H(+). It catalyses the reaction L-threonyl-[protein] + ATP = O-phospho-L-threonyl-[protein] + ADP + H(+). Functionally, required for larval development. This is Serine/threonine-protein kinase RIO2 from Caenorhabditis elegans.